A 181-amino-acid polypeptide reads, in one-letter code: MTLIVGLGNPTSKYENTRHNIGFMLIDALKNSNFTDVSSSKFQGELFKYSNLLLLKPTTFMNLSGNSVKAVNDFYKPERIIVIHDDLDLPFGAMKFKKGGSSGGHNGIRSIDTLIGNDYERVRIGIGRSGNAANFVLGEFSPEEKEHLAEILEYGTQAVNELIKSDIESVAQKFTIKKGVL.

A tRNA-binding site is contributed by Tyr14. Catalysis depends on His19, which acts as the Proton acceptor. Positions 60, 62, and 106 each coordinate tRNA.

It belongs to the PTH family. Monomer.

The protein localises to the cytoplasm. It carries out the reaction an N-acyl-L-alpha-aminoacyl-tRNA + H2O = an N-acyl-L-amino acid + a tRNA + H(+). In terms of biological role, hydrolyzes ribosome-free peptidyl-tRNAs (with 1 or more amino acids incorporated), which drop off the ribosome during protein synthesis, or as a result of ribosome stalling. Catalyzes the release of premature peptidyl moieties from peptidyl-tRNA molecules trapped in stalled 50S ribosomal subunits, and thus maintains levels of free tRNAs and 50S ribosomes. The protein is Peptidyl-tRNA hydrolase of Campylobacter curvus (strain 525.92).